The sequence spans 70 residues: ATP synthase subunit c (70 aa).

The next 2 membrane-spanning stretches (helical) occupy residues 3–23 (ALAA…IGIA) and 44–64 (LFLI…VIAF).

It belongs to the ATPase C chain family. In terms of assembly, F-type ATPases have 2 components, F(1) - the catalytic core - and F(0) - the membrane proton channel. F(1) has five subunits: alpha(3), beta(3), gamma(1), delta(1), epsilon(1). F(0) has three main subunits: a(1), b(2) and c(10-14). The alpha and beta chains form an alternating ring which encloses part of the gamma chain. F(1) is attached to F(0) by a central stalk formed by the gamma and epsilon chains, while a peripheral stalk is formed by the delta and b chains.

The protein resides in the cell membrane. Its function is as follows. F(1)F(0) ATP synthase produces ATP from ADP in the presence of a proton or sodium gradient. F-type ATPases consist of two structural domains, F(1) containing the extramembraneous catalytic core and F(0) containing the membrane proton channel, linked together by a central stalk and a peripheral stalk. During catalysis, ATP synthesis in the catalytic domain of F(1) is coupled via a rotary mechanism of the central stalk subunits to proton translocation. In terms of biological role, key component of the F(0) channel; it plays a direct role in translocation across the membrane. A homomeric c-ring of between 10-14 subunits forms the central stalk rotor element with the F(1) delta and epsilon subunits. The polypeptide is ATP synthase subunit c (Caldicellulosiruptor bescii (strain ATCC BAA-1888 / DSM 6725 / KCTC 15123 / Z-1320) (Anaerocellum thermophilum)).